The primary structure comprises 530 residues: Ubiquitin carboxyl-terminal hydrolase 17-like protein 20 (530 aa).

Residues 80-375 enclose the USP domain; the sequence is AGLQNMGNTC…QAYVLFYIQK (296 aa). C89 functions as the Nucleophile in the catalytic mechanism. H334 serves as the catalytic Proton acceptor. Basic and acidic residues-rich tracts occupy residues 382 to 392 and 398 to 413; these read SESVSRGREPR and DTDRRATQGELKRDHP. 2 disordered regions span residues 382-413 and 509-530; these read SESVSRGREPRALGAEDTDRRATQGELKRDHP and RGRARRSKGKNKHSKRALLVCQ. The span at 510 to 524 shows a compositional bias: basic residues; it reads GRARRSKGKNKHSKR.

Belongs to the peptidase C19 family. USP17 subfamily.

The protein resides in the nucleus. It localises to the endoplasmic reticulum. It carries out the reaction Thiol-dependent hydrolysis of ester, thioester, amide, peptide and isopeptide bonds formed by the C-terminal Gly of ubiquitin (a 76-residue protein attached to proteins as an intracellular targeting signal).. In terms of biological role, deubiquitinating enzyme that removes conjugated ubiquitin from specific proteins to regulate different cellular processes that may include cell proliferation, progression through the cell cycle, apoptosis, cell migration, and the cellular response to viral infection. This Homo sapiens (Human) protein is Ubiquitin carboxyl-terminal hydrolase 17-like protein 20 (USP17L20).